We begin with the raw amino-acid sequence, 79 residues long: Sec-independent protein translocase protein TatA (79 aa).

Residues 1–21 (MGGISIWQLLIIALIVVLLFG) form a helical membrane-spanning segment. Positions 43–79 (MSSEEDKKALEDTEAAKTAQTTQQATEKKPESNKEQA) are disordered. The span at 46–57 (EEDKKALEDTEA) shows a compositional bias: basic and acidic residues. Residues 58-67 (AKTAQTTQQA) show a composition bias toward low complexity. Basic and acidic residues predominate over residues 68-79 (TEKKPESNKEQA).

The protein belongs to the TatA/E family. The Tat system comprises two distinct complexes: a TatABC complex, containing multiple copies of TatA, TatB and TatC subunits, and a separate TatA complex, containing only TatA subunits. Substrates initially bind to the TatABC complex, which probably triggers association of the separate TatA complex to form the active translocon.

The protein localises to the cell inner membrane. Its function is as follows. Part of the twin-arginine translocation (Tat) system that transports large folded proteins containing a characteristic twin-arginine motif in their signal peptide across membranes. TatA could form the protein-conducting channel of the Tat system. This is Sec-independent protein translocase protein TatA from Shewanella putrefaciens (strain CN-32 / ATCC BAA-453).